The sequence spans 198 residues: MAFELPPLPYAHDALQPHISKETLEYHHDKHHNTYVVNLNNLVPGTEFEGKTLEEIVKSSSGGIFNNAAQVWNHTFYWNCLSPNGGGQPTGALADAINAAFGSFDKFKEEFTKTSVGTFGSGWGWLVKKADGSLALASTIGAGCPLTSGDTPLLTCDVWEHAYYIDYRNLRPKYVEAFWNLVNWAFVAEQFEGKTFKA.

The Fe cation site is built by histidine 27, histidine 74, aspartate 157, and histidine 161.

It belongs to the iron/manganese superoxide dismutase family. Homodimer. It depends on Fe cation as a cofactor.

The enzyme catalyses 2 superoxide + 2 H(+) = H2O2 + O2. Its function is as follows. Destroys superoxide anion radicals which are normally produced within the cells and which are toxic to biological systems. The chain is Superoxide dismutase [Fe] (sodB) from Pseudomonas putida (strain ATCC 47054 / DSM 6125 / CFBP 8728 / NCIMB 11950 / KT2440).